The sequence spans 62 residues: Photosystem II reaction center protein Z (62 aa).

2 helical membrane-spanning segments follow: residues 8–28 (TLFA…VVFA) and 41–61 (FSGV…NSFV).

This sequence belongs to the PsbZ family. PSII is composed of 1 copy each of membrane proteins PsbA, PsbB, PsbC, PsbD, PsbE, PsbF, PsbH, PsbI, PsbJ, PsbK, PsbL, PsbM, PsbT, PsbY, PsbZ, Psb30/Ycf12, at least 3 peripheral proteins of the oxygen-evolving complex and a large number of cofactors. It forms dimeric complexes.

It is found in the plastid. It localises to the chloroplast thylakoid membrane. In terms of biological role, may control the interaction of photosystem II (PSII) cores with the light-harvesting antenna, regulates electron flow through the 2 photosystem reaction centers. PSII is a light-driven water plastoquinone oxidoreductase, using light energy to abstract electrons from H(2)O, generating a proton gradient subsequently used for ATP formation. This is Photosystem II reaction center protein Z from Oltmannsiellopsis viridis (Marine flagellate).